The primary structure comprises 299 residues: Bifunctional protein FolD (299 aa).

Residues 169-171 (GRS), Ser194, and Ile235 contribute to the NADP(+) site.

The protein belongs to the tetrahydrofolate dehydrogenase/cyclohydrolase family. As to quaternary structure, homodimer.

The catalysed reaction is (6R)-5,10-methylene-5,6,7,8-tetrahydrofolate + NADP(+) = (6R)-5,10-methenyltetrahydrofolate + NADPH. The enzyme catalyses (6R)-5,10-methenyltetrahydrofolate + H2O = (6R)-10-formyltetrahydrofolate + H(+). It participates in one-carbon metabolism; tetrahydrofolate interconversion. Functionally, catalyzes the oxidation of 5,10-methylenetetrahydrofolate to 5,10-methenyltetrahydrofolate and then the hydrolysis of 5,10-methenyltetrahydrofolate to 10-formyltetrahydrofolate. In Nostoc sp. (strain PCC 7120 / SAG 25.82 / UTEX 2576), this protein is Bifunctional protein FolD.